The chain runs to 349 residues: NADH-ubiquinone oxidoreductase chain 2 (349 aa).

9 consecutive transmembrane segments (helical) span residues Pro-3–Ser-23, Ala-66–Ile-86, Val-98–Val-118, Phe-139–Leu-159, Ile-178–Pro-198, Ser-199–Leu-219, Leu-240–Phe-260, Gly-274–Leu-294, and Phe-319–Leu-339.

It belongs to the complex I subunit 2 family.

The protein localises to the mitochondrion inner membrane. It carries out the reaction a ubiquinone + NADH + 5 H(+)(in) = a ubiquinol + NAD(+) + 4 H(+)(out). Its function is as follows. Core subunit of the mitochondrial membrane respiratory chain NADH dehydrogenase (Complex I) that is believed to belong to the minimal assembly required for catalysis. Complex I functions in the transfer of electrons from NADH to the respiratory chain. The immediate electron acceptor for the enzyme is believed to be ubiquinone. This is NADH-ubiquinone oxidoreductase chain 2 (MT-ND2) from Oncorhynchus mykiss (Rainbow trout).